The primary structure comprises 450 residues: Glycerol dehydrogenase 1 (450 aa).

NAD(+)-binding positions include Asp99, 155–159, and 177–180; these read GKTMD and TTAS. Asp182 is a binding site for substrate. Residues Ser186, Leu188, and Tyr192 each contribute to the NAD(+) site. The substrate site is built by Asp232, His315, and His333. Zn(2+) contacts are provided by Asp232, His315, and His333.

It belongs to the iron-containing alcohol dehydrogenase family. It depends on Zn(2+) as a cofactor.

The protein localises to the mitochondrion. It carries out the reaction glycerol + NAD(+) = dihydroxyacetone + NADH + H(+). Its pathway is polyol metabolism; glycerol fermentation; glycerone phosphate from glycerol (oxidative route): step 1/2. Its function is as follows. Glycerol dehydrogenase involved in the assimilation of glycerol. In Schizosaccharomyces pombe (strain 972 / ATCC 24843) (Fission yeast), this protein is Glycerol dehydrogenase 1 (gld1).